The primary structure comprises 395 residues: MMKPEFFCFSGFCVYFLFLQVVVSSEKLRVTTPTRHLLARVGGQAELSCQVIPPHSVMHMEVRWFRSGHSQPVYLYRGGHKMSEEAAPEYANRTEFVKEAIGEGKVSLRIHNINILDDGPYQCSFNGSGFIDAAIMNLNVTAVGLETEIHVQAPDADGVMVECNSGGWFPRPQMEWRDSKGATLPHSLKSYSQDEARFFYMKMTLLLTNMSHGSIICCIFNPVTGEEKQTSIILANELFNRDRIWMESLASIVWIMLSVYILYIICFYWRTGCASGCLSKCFCVVTSWPVQIVHLLFCTGTFFAIYLPHRSRVSLSDPQFPLYNNWITELLFVILFLTICFALPIILLFIQFQFTSLTKWEKNKDGIMDQPRLGKAHETSSLYRKKTGKSWEQEK.

A signal peptide spans 1–25 (MMKPEFFCFSGFCVYFLFLQVVVSS). One can recognise an Ig-like V-type domain in the interval 26 to 141 (EKLRVTTPTR…DAAIMNLNVT (116 aa)). Residues 26–248 (EKLRVTTPTR…FNRDRIWMES (223 aa)) lie on the Extracellular side of the membrane. Cys49 and Cys123 are joined by a disulfide. N-linked (GlcNAc...) asparagine glycans are attached at residues Asn92 and Asn139. The Ig-like C1-type domain occupies 142–233 (AVGLETEIHV…TGEEKQTSII (92 aa)). Cys163 and Cys217 are joined by a disulfide. The helical transmembrane segment at 249 to 269 (LASIVWIMLSVYILYIICFYW) threads the bilayer. At 270–287 (RTGCASGCLSKCFCVVTS) the chain is on the cytoplasmic side. The helical transmembrane segment at 288-308 (WPVQIVHLLFCTGTFFAIYLP) threads the bilayer. Residues 309 to 329 (HRSRVSLSDPQFPLYNNWITE) are Extracellular-facing. Residues 330 to 350 (LLFVILFLTICFALPIILLFI) traverse the membrane as a helical segment. Over 351–395 (QFQFTSLTKWEKNKDGIMDQPRLGKAHETSSLYRKKTGKSWEQEK) the chain is Cytoplasmic. Residues 371–395 (PRLGKAHETSSLYRKKTGKSWEQEK) form a disordered region.

The protein belongs to the SKINT family. Expressed in skin, thymus, testis and, to a lower extent, bladder.

It is found in the membrane. In terms of biological role, may act by engaging a cell surface molecule on immature T-cells in the embryonic thymus. The sequence is that of Selection and upkeep of intraepithelial T-cells protein 7 (Skint7) from Mus musculus (Mouse).